A 197-amino-acid chain; its full sequence is MRKATITRKTKETAIEVAVDLDGTGVSQVATGIGFFDHMLDLLARHSRIDIKVKADGDLHVDYHHTVEDVGIALGQAVKQALGSMAGITRYASLYMPMDETLTRVAIDISGRPALVFKAEFPRDKIGEFDTELVREWFNAFAGNAGITLHVETLYGENSHHIAESCFKGLARALRAAVAIDPRAAGEVPSTKGQLGG.

This sequence belongs to the imidazoleglycerol-phosphate dehydratase family.

The protein resides in the cytoplasm. The enzyme catalyses D-erythro-1-(imidazol-4-yl)glycerol 3-phosphate = 3-(imidazol-4-yl)-2-oxopropyl phosphate + H2O. It functions in the pathway amino-acid biosynthesis; L-histidine biosynthesis; L-histidine from 5-phospho-alpha-D-ribose 1-diphosphate: step 6/9. This is Imidazoleglycerol-phosphate dehydratase from Rhodopseudomonas palustris (strain BisA53).